Reading from the N-terminus, the 21-residue chain is Fibrinogen beta chain (21 aa).

Q1 carries the pyrrolidone carboxylic acid modification. The segment covering 1-11 (QFPTDYDEGED) has biased composition (acidic residues). The segment at 1–21 (QFPTDYDEGEDDRPKSGLGAR) is disordered. O-linked (GalNAc...) threonine glycosylation occurs at T4. Residue Y6 is modified to Sulfotyrosine.

In terms of assembly, heterohexamer; disulfide linked. Contains 2 sets of 3 non-identical chains (alpha, beta and gamma). The 2 heterotrimers are in head to head conformation with the N-termini in a small central domain. In terms of processing, conversion of fibrinogen to fibrin is triggered by thrombin, which cleaves fibrinopeptides A and B from alpha and beta chains, and thus exposes the N-terminal polymerization sites responsible for the formation of the soft clot.

The protein resides in the secreted. Functionally, cleaved by the protease thrombin to yield monomers which, together with fibrinogen alpha (FGA) and fibrinogen gamma (FGG), polymerize to form an insoluble fibrin matrix. Fibrin has a major function in hemostasis as one of the primary components of blood clots. In addition, functions during the early stages of wound repair to stabilize the lesion and guide cell migration during re-epithelialization. Was originally thought to be essential for platelet aggregation, based on in vitro studies using anticoagulated blood. However subsequent studies have shown that it is not absolutely required for thrombus formation in vivo. Enhances expression of SELP in activated platelets. Maternal fibrinogen is essential for successful pregnancy. Fibrin deposition is also associated with infection, where it protects against IFNG-mediated hemorrhage. May also facilitate the antibacterial immune response via both innate and T-cell mediated pathways. In Syncerus caffer (African buffalo), this protein is Fibrinogen beta chain (FGB).